Consider the following 303-residue polypeptide: Esterase (303 aa).

Residues 79–81 (HGG) carry the Involved in the stabilization of the negatively charged intermediate by the formation of the oxyanion hole motif. Active-site residues include S149 and E244.

Belongs to the 'GDXG' lipolytic enzyme family.

The protein resides in the secreted. This is Esterase (est) from Acinetobacter venetianus (strain ATCC 31012 / DSM 23050 / BCRC 14357 / CCUG 45561 / CIP 110063 / KCTC 2702 / LMG 19082 / RAG-1).